A 434-amino-acid chain; its full sequence is Eukaryotic translation initiation factor 3 subunit E (434 aa).

The 174-residue stretch at 219–392 (FFNHPKGRDL…GHVVMGTQPL (174 aa)) folds into the PCI domain.

It belongs to the eIF-3 subunit E family. Component of the eukaryotic translation initiation factor 3 (eIF-3) complex. The eIF-3 complex interacts with pix. Interacts with mxt.

The protein localises to the cytoplasm. Its function is as follows. Component of the eukaryotic translation initiation factor 3 (eIF-3) complex, which is involved in protein synthesis of a specialized repertoire of mRNAs and, together with other initiation factors, stimulates binding of mRNA and methionyl-tRNAi to the 40S ribosome. The eIF-3 complex specifically targets and initiates translation of a subset of mRNAs involved in cell proliferation. The sequence is that of Eukaryotic translation initiation factor 3 subunit E (eIF3-S6) from Drosophila ananassae (Fruit fly).